The sequence spans 345 residues: Trace amine-associated receptor 6 (345 aa).

Residues 1 to 32 (MGSNSSPPTVLQLCYENVTGSCVKTPYSPGSR) are Extracellular-facing. An N-linked (GlcNAc...) asparagine glycan is attached at N17. Disulfide bonds link C22–C186 and C105–C190. The helical transmembrane segment at 33 to 53 (VILYAVFGFGAVLAVFGNLMV) threads the bilayer. Over 54 to 68 (MISILHFKQLHSPTN) the chain is Cytoplasmic. The helical transmembrane segment at 69 to 89 (FLIASLACADFGVGISVMPFS) threads the bilayer. Topologically, residues 90-107 (MVRSIESCWYFGRSFCTF) are extracellular. Residues 108 to 128 (HTCCDVAFCYSSLFHLSFISI) traverse the membrane as a helical segment. The Cytoplasmic segment spans residues 129–147 (DRYIAVTDPLVYPTKFTVS). A helical membrane pass occupies residues 148-168 (VSGICIGVSWILPLVYSGAVF). The Extracellular segment spans residues 169 to 202 (YTGVYDDGLEELSSALNCVGGCQVVVNQNWVLID). Positions 174-187 (DDGLEELSSALNCV) are extracellular Loop 2 (ECL2). The chain crosses the membrane as a helical span at residues 203–223 (FLSFLIPTLVMIILYGNIFLV). Residues 224–259 (ARQQAKKIENIGSKTESSSESYKARVARRERKAAKT) are Cytoplasmic-facing. Residues 260-276 (LGITVVAFMISWLPYSI) form a helical membrane-spanning segment. The Extracellular segment spans residues 277 to 282 (DSLVDA). Residues 283-302 (FMGFITPAYIYEICVWCAYY) form a helical membrane-spanning segment. Over 303-345 (NSAMNPLIYALFYPWFKKAIKVIMSGQVFKNSSATMNLFSEQI) the chain is Cytoplasmic.

This sequence belongs to the G-protein coupled receptor 1 family. In terms of tissue distribution, specifically expressed in neurons of the olfactory epithelium, to discrete glomeruli predominantly localized to a confined bulb region. Present in a ventral area of the main olfactory epithelium.

The protein localises to the cell membrane. In terms of biological role, olfactory receptor specific for trace amines, such as beta-phenylethylamine (beta-PEA). Trace amine compounds are enriched in animal body fluids and act on trace amine-associated receptors (TAARs) to elicit both intraspecific and interspecific innate behaviors. Beta-PEA-binding causes a conformation change that triggers signaling via G(s)-class of G alpha proteins (GNAL or GNAS). The chain is Trace amine-associated receptor 6 from Mus musculus (Mouse).